Here is a 562-residue protein sequence, read N- to C-terminus: Probable malate:quinone oxidoreductase (562 aa).

The tract at residues 535–562 (SATPADPTIAPKNQHSTTYNANSEMQAL) is disordered. Residues 545 to 562 (PKNQHSTTYNANSEMQAL) show a composition bias toward polar residues.

This sequence belongs to the MQO family. The cofactor is FAD.

The catalysed reaction is (S)-malate + a quinone = a quinol + oxaloacetate. It participates in carbohydrate metabolism; tricarboxylic acid cycle; oxaloacetate from (S)-malate (quinone route): step 1/1. The polypeptide is Probable malate:quinone oxidoreductase (Xylella fastidiosa (strain M23)).